Consider the following 450-residue polypeptide: RUN domain-containing protein 3B (450 aa).

Positions 48 to 180 (DDTSAEFINF…IDFSFCLKGE (133 aa)) constitute an RUN domain. A disordered region spans residues 203-225 (DSISSDEEEMRTLGSSGSEAGTP). Residues 291 to 317 (ISHKLEKEQLEIIILELQDQLTVLKNH) adopt a coiled-coil conformation.

The protein belongs to the RUNDC3 family.

The chain is RUN domain-containing protein 3B (rundc3b) from Danio rerio (Zebrafish).